We begin with the raw amino-acid sequence, 603 residues long: Baeyer-Villiger monooxygenase (603 aa).

Residues Glu94, 102-105, Asp114, Tyr120, and Val164 contribute to the FAD site; that span reads TWYW. NADP(+) is bound at residue 112 to 114; sequence HCD. Residues 248–254, 271–272, and 386–387 each bind NADP(+); these read TGATGVQ, RT, and KR.

It belongs to the FAD-binding monooxygenase family. It depends on FAD as a cofactor.

Functionally, catalyzes a Baeyer-Villiger oxidation reaction, i.e. the insertion of an oxygen atom into a carbon-carbon bond adjacent to a carbonyl, which converts ketones to esters or lactones using NADPH and/or NADH as an electron donor. Thus, can convert bicyclo[3.2.0]hept-2-en-6-one into the oxidative lactone products 2-oxabicyclo[3.3.0]oct-6-en-3-one and 3-oxabicyclo[3.3.0]oct-6-en-2-one. Is also able to catalyze the sulfoxidation of methyl phenyl sulfide (thioanisole). In Streptomyces coelicolor (strain ATCC BAA-471 / A3(2) / M145), this protein is Baeyer-Villiger monooxygenase.